Consider the following 1014-residue polypeptide: MDAQIENAIEVAWNPSSSQELKGQAFEYLNQLRVDPQAWQVCIGLFTRSPPASEVVRLVSLEIINNAVHSEALDAASLVYLKQSLLEYIGRTYTSNTQSQVDPAHLQNKLTQTLTYLFVFLYREHWSSFVQDFYAIAQNDNLPGVILYLRILSSIHDEIADLMLSRQEQEAKRNSDLKDLIRERDMAKIATSWTDILSRYSNQHDGVVEMTLKIIGKWVSWIDISLVINQQMLGLLLPLVGRSNASGGEDKVRDIAVDTFTEIVSKKMKASDKIEMINFLQLREIITELLASPPLNEWKGTSQYDTDLAEVVAKLVNAIMSDIVRVLEDGKVDNDTRAKAEQLLQYFLPSLLRLFSDEYDEVCSTVIPSLTDLLTFLRKVRTLPATYAEMLPPILNAIVLKMRYDETSNWGLEDEQTDEAEFLELRKRLQILQKSVAAVDENLCMEFMSNLVGNMFSTLQQQGSQMDWRDLDLALHEMYLFGELALPNMGLAAKSQPNPVAAERLALMMSKMVDSGIANYAHPAILLQYMEICVRYHSFFESHQNYIPRVLENFVRLVHHEHVRVRTRSWYLFLRFVKTLRAQVGNVAKTVIESISDLLPIKAEVPSNDADDDMSSDESDHSADAVFNGQLYLFEAVGCVSATSATPVADQALYARSVMEPLFSDMSVHLERAKAGDAQAILQIHHIIMALGTLANGFADTPLGHTKARAQPAQEISAEFTRASEAILIALNQLNTSDEIRAACRSAFSRLLGVLGSAVLPQLPQWIEGLLSRSSSKDEMAMFLRLLEQIVYNFKGEISNILDLLLTPLLQRVFGGLSEPINGTDDEIQLQELRREYVSFVQVIFMNDLGGVLVSAANQGNFESLVSSIFSVAKNLNHGNLVASRIAFNVLSRMITQWGGPDIITPGENPVATGPPSPTIPGFEQFMLSQFHGVCWDVLQDGGFRPSSDATSRQILNEIAGIQQAIWMKTADLYINHVQNQLGQDSNDFLRTLTTTTARKPLVDWFLALLKGRK.

This sequence belongs to the exportin family.

The protein resides in the nucleus. The protein localises to the cytoplasm. TRNA nucleus export receptor which facilitates tRNA translocation across the nuclear pore complex. Involved in pre-tRNA splicing, probably by affecting the interaction of pre-tRNA with splicing endonuclease. The chain is Exportin-T (LOS1) from Podospora anserina (strain S / ATCC MYA-4624 / DSM 980 / FGSC 10383) (Pleurage anserina).